Here is a 537-residue protein sequence, read N- to C-terminus: MTSKLTGFSPRSARRVAGVWTVFVLASAGWALGGQLGAVMAVVVGVALVFVQWWGQPAWSWAVLGLRGRRPVKWNDPITLANNRSGGGVRVQDGVAVVAVQLLGRAHRATTVTGSVTVESDNVIDVVELAPLLRHPLDLELDSISVVTFGSRTGTVGDYPRVYDAEIGTPPYAGRRETWLIMRLPVIGNTQALRWRTSVGAAAISVAQRVASSLRCQGLRAKLATATDLAELDRRLGSDAVAGSAQRWKAIRGEAGWMTTYAYPAEAISSRVLSQAWTLRADEVIQNVTVYPDATCTATITVRTPTPAPTPPSVILRRLNGEQAAAAAANMCGPRPHLRGQRRCPLPAQLVTEIGPSGVLIGKLSNGDRLMIPVTDAGELSRVFVAADDTIAKRIVIRVVGAGERVCVHTRDQERWASVRMPQLSIVGTPRPAPRTTVGVVEYVRRRKNGDDGKSEGSGVDVAISPTPRPASVITIARPGTSLSESDRHGFEVTIEQIDRATVKVGAAGQNWLVEMEMFRAENRYVSLEPVTMSIGR.

Residues 31–51 (ALGGQLGAVMAVVVGVALVFV) traverse the membrane as a helical segment.

This sequence belongs to the EccE family. As to quaternary structure, could be part of the ESX-2 / type VII secretion system (T7SS), which is composed of cytosolic and membrane components.

The protein resides in the cell membrane. The polypeptide is ESX-2 secretion system protein EccE2 (eccE2) (Mycobacterium tuberculosis (strain CDC 1551 / Oshkosh)).